The chain runs to 308 residues: Glutaminase (308 aa).

Residues Ser66, Asn117, Glu161, Asn168, Tyr192, Tyr244, and Val262 each coordinate substrate.

The protein belongs to the glutaminase family. As to quaternary structure, homotetramer.

The catalysed reaction is L-glutamine + H2O = L-glutamate + NH4(+). This Photorhabdus laumondii subsp. laumondii (strain DSM 15139 / CIP 105565 / TT01) (Photorhabdus luminescens subsp. laumondii) protein is Glutaminase.